A 287-amino-acid chain; its full sequence is Festuclavine synthase II (287 aa).

This sequence belongs to the fgaFS/easG family.

The catalysed reaction is festuclavine + NAD(+) = 6,8-dimethyl-6,7-didehydroergoline + NADH + H(+). It participates in alkaloid biosynthesis; ergot alkaloid biosynthesis. In terms of biological role, festuclavine synthase; part of the gene cluster that mediates the biosynthesis of isofumigaclavines, fungal ergot alkaloids. The tryptophan dimethylallyltransferase ifgA catalyzes the first step of ergot alkaloid biosynthesis by condensing dimethylallyl diphosphate (DMAP) and tryptophan to form 4-dimethylallyl-L-tryptophan. The second step is catalyzed by the methyltransferase ifgB that methylates 4-dimethylallyl-L-tryptophan in the presence of S-adenosyl-L-methionine, resulting in the formation of N-methyl-dimethylallyl-L-tryptophan. The catalase ifgD and the FAD-dependent oxidoreductase ifgC then transform N-methyl-dimethylallyl-L-tryptophan to chanoclavine-I which is further oxidized by ifgE in the presence of NAD(+), resulting in the formation of chanoclavine-I aldehyde. The chanoclavine-I aldehyde reductases ifgG and/or fgaOx3 reduce chanoclavine-I aldehyde to dihydrochanoclavine-I aldehyde that spontaneously dehydrates to form 6,8-dimethyl-6,7-didehydroergoline. The festuclavine dehydrogenases ifgF1 and/or ifgF2 then catalyze the reduction of 6,8-dimethyl-6,7-didehydroergoline to form festuclavine. Hydrolysis of festuclavine by a yet undetermined cytochrome P450 monooxygenase (called ifgH) then leads to the formation of isofumigaclavine B which is in turn acetylated by ifgI to isofumigaclavine A. Penicillium roqueforti has interestingly at least two sets of genes for the consumption of chanoclavine-I aldehyde on three different loci, the OYEs ifgG/fgaOx3 and the festuclavine synthase homologs ifgF1/ifgF2. The reason for the duplication of these genes is unclear, probably to ensure the conversion of chanoclavine-I aldehyde by differential gene expression under various environmental conditions. The sequence is that of Festuclavine synthase II from Penicillium roqueforti (strain FM164).